The following is a 131-amino-acid chain: Fumarate reductase subunit C (131 aa).

Helical transmembrane passes span 30–50 (EGTA…LFAL), 57–77 (WMGF…LITL), and 109–129 (IIKG…YVAL).

The protein belongs to the FrdC family. In terms of assembly, part of an enzyme complex containing four subunits: a flavoprotein (FrdA), an iron-sulfur protein (FrdB), and two hydrophobic anchor proteins (FrdC and FrdD).

It is found in the cell inner membrane. Its function is as follows. Two distinct, membrane-bound, FAD-containing enzymes are responsible for the catalysis of fumarate and succinate interconversion; fumarate reductase is used in anaerobic growth, and succinate dehydrogenase is used in aerobic growth. Anchors the catalytic components of the fumarate reductase complex to the cell inner membrane, binds quinones. The protein is Fumarate reductase subunit C of Salmonella dublin (strain CT_02021853).